The primary structure comprises 108 residues: Protein RnfH (108 aa).

This sequence belongs to the UPF0125 (RnfH) family.

The chain is Protein RnfH from Laribacter hongkongensis (strain HLHK9).